We begin with the raw amino-acid sequence, 465 residues long: L-cystine uptake protein TcyP (465 aa).

The next 10 membrane-spanning stretches (helical) occupy residues L3–M23, V34–P54, Y73–F93, I105–I125, P184–V204, A224–T246, F263–A283, L338–A358, F370–G390, and F394–I414.

It belongs to the dicarboxylate/amino acid:cation symporter (DAACS) (TC 2.A.23) family.

The protein localises to the membrane. Mediates uptake of L-cystine, the oxidized form of L-cysteine. The protein is L-cystine uptake protein TcyP of Shouchella clausii (strain KSM-K16) (Alkalihalobacillus clausii).